The sequence spans 181 residues: Translation initiation factor IF-3 (181 aa).

The protein belongs to the IF-3 family. In terms of assembly, monomer.

The protein localises to the cytoplasm. Its function is as follows. IF-3 binds to the 30S ribosomal subunit and shifts the equilibrium between 70S ribosomes and their 50S and 30S subunits in favor of the free subunits, thus enhancing the availability of 30S subunits on which protein synthesis initiation begins. This chain is Translation initiation factor IF-3, found in Mycoplasma mycoides subsp. mycoides SC (strain CCUG 32753 / NCTC 10114 / PG1).